Consider the following 252-residue polypeptide: Triosephosphate isomerase (252 aa).

10-12 (NWK) is a binding site for substrate. Catalysis depends on H96, which acts as the Electrophile. The Proton acceptor role is filled by E168. Residues G174, S213, and 234–235 (GG) each bind substrate.

The protein belongs to the triosephosphate isomerase family. Homodimer.

The protein resides in the cytoplasm. The catalysed reaction is D-glyceraldehyde 3-phosphate = dihydroxyacetone phosphate. It participates in carbohydrate biosynthesis; gluconeogenesis. The protein operates within carbohydrate degradation; glycolysis; D-glyceraldehyde 3-phosphate from glycerone phosphate: step 1/1. Involved in the gluconeogenesis. Catalyzes stereospecifically the conversion of dihydroxyacetone phosphate (DHAP) to D-glyceraldehyde-3-phosphate (G3P). In Idiomarina loihiensis (strain ATCC BAA-735 / DSM 15497 / L2-TR), this protein is Triosephosphate isomerase.